The primary structure comprises 156 residues: Small ribosomal subunit protein uS7 (156 aa).

It belongs to the universal ribosomal protein uS7 family. In terms of assembly, part of the 30S ribosomal subunit. Contacts proteins S9 and S11.

In terms of biological role, one of the primary rRNA binding proteins, it binds directly to 16S rRNA where it nucleates assembly of the head domain of the 30S subunit. Is located at the subunit interface close to the decoding center, probably blocks exit of the E-site tRNA. The polypeptide is Small ribosomal subunit protein uS7 (Sorangium cellulosum (strain So ce56) (Polyangium cellulosum (strain So ce56))).